The following is a 220-amino-acid chain: Thiopurine S-methyltransferase (220 aa).

Positions 10, 45, 66, and 123 each coordinate S-adenosyl-L-methionine.

The protein belongs to the class I-like SAM-binding methyltransferase superfamily. TPMT family.

Its subcellular location is the cytoplasm. The catalysed reaction is S-adenosyl-L-methionine + a thiopurine = S-adenosyl-L-homocysteine + a thiopurine S-methylether.. This is Thiopurine S-methyltransferase from Nitrosomonas eutropha (strain DSM 101675 / C91 / Nm57).